A 321-amino-acid polypeptide reads, in one-letter code: Carnitine monooxygenase reductase subunit (321 aa).

Positions 4–109 (YQMFEVQVSQ…STPNNLFALI (106 aa)) constitute an FAD-binding FR-type domain. Residues 233-321 (DAFTLVLARS…AKGKRLVLDL (89 aa)) form the 2Fe-2S ferredoxin-type domain. Cysteine 270, cysteine 275, cysteine 278, and cysteine 308 together coordinate [2Fe-2S] cluster.

It belongs to the PDR/VanB family. CntB subfamily. In terms of assembly, composed of an oxygenase subunit (yeaW) and a reductase subunit (yeaX). Requires FMN as cofactor. [2Fe-2S] cluster is required as a cofactor.

It carries out the reaction (R)-carnitine + NADH + O2 + H(+) = (3R)-3-hydroxy-4-oxobutanoate + trimethylamine + NAD(+) + H2O. The enzyme catalyses (R)-carnitine + NADPH + O2 + H(+) = (3R)-3-hydroxy-4-oxobutanoate + trimethylamine + NADP(+) + H2O. It participates in amine and polyamine metabolism; carnitine metabolism. In terms of biological role, converts carnitine to trimethylamine and malic semialdehyde. Can also use gamma-butyrobetaine, choline and betaine as substrates. The sequence is that of Carnitine monooxygenase reductase subunit (yeaX) from Escherichia coli (strain K12).